A 239-amino-acid chain; its full sequence is Claudin-14 (239 aa).

Topologically, residues 1–7 are cytoplasmic; the sequence is MASTAVQ. The helical transmembrane segment at 8-28 threads the bilayer; the sequence is LLGFLLSFLGMVGTLITTILP. The Extracellular portion of the chain corresponds to 29 to 81; it reads HWRRTAHVGTNILTAVSYLKGLWMECVWHSTGIYQCQIYRSLLALPRDLQAAR. Residues 82–102 form a helical membrane-spanning segment; that stretch reads ALMVISCLLSGMACACAVVGM. Topologically, residues 103–115 are cytoplasmic; it reads KCTRCAKGTPAKT. A helical membrane pass occupies residues 116-136; sequence TFAVLGGALFLLAGLLCMVAV. Residues 137–162 are Extracellular-facing; the sequence is SWTTNDVVQNFYNPLLPSGMKFEIGQ. Residues 163–183 form a helical membrane-spanning segment; sequence ALYLGFISSSLSLIGGTLLCL. Over 184 to 239 the chain is Cytoplasmic; sequence SCQDEAPYRPYPPQSRAGATTTATAPAYRPPAAYKDNRAPSVTSAAHSGYRLNDYV.

This sequence belongs to the claudin family. Expressed in all sensory epithelia of the inner ear vestibular organs, as well as in liver and kidney.

It localises to the cell junction. It is found in the tight junction. The protein resides in the cell membrane. In terms of biological role, plays a major role in tight junction-specific obliteration of the intercellular space, through calcium-independent cell-adhesion activity. The chain is Claudin-14 (Cldn14) from Mus musculus (Mouse).